The primary structure comprises 346 residues: FMRFamide-related peptides type HF-1 (346 aa).

The N-terminal stretch at 1–19 (MTSLCLTIAPAVLSLICLS) is a signal peptide. A propeptide spanning residues 20–45 (SYGWAEDNNGIHTLDDGDNDPFFRHN) is cleaved from the precursor. Residue Phe51 is modified to Phenylalanine amide. The propeptide occupies 54–94 (AFVPLWDNADDSLVRKNLLTHWSEFPLSPALSSSDVFSRNS). Phe100 carries the post-translational modification Phenylalanine amide. A propeptide spanning residues 103-109 (SYPPYQD) is cleaved from the precursor. Position 115 is a phenylalanine amide (Phe115). Residues 118 to 203 (SHQPDIDEYL…EILSNEDDLE (86 aa)) constitute a propeptide that is removed on maturation. The tract at residues 137–185 (YRKRRSEDGDSKEDGLNRVARSADANQQSKNTQSNKFGKDLQKRETKKE) is disordered. The span at 141-152 (RSEDGDSKEDGL) shows a compositional bias: basic and acidic residues. Over residues 160–172 (DANQQSKNTQSNK) the composition is skewed to polar residues. Residues 173 to 185 (FGKDLQKRETKKE) are compositionally biased toward basic and acidic residues. A phenylalanine amide mark is found at Phe209 and Phe216. The propeptide occupies 219–226 (GDEDESYD). Phe232 is subject to Phenylalanine amide. The propeptide occupies 235–243 (SLRHDQEFE). Phe249 and Phe256 each carry phenylalanine amide. Positions 259–267 (GDEDDAREE) are excised as a propeptide. Phe273 is subject to Phenylalanine amide. The propeptide occupies 276–283 (SSNEDEDI). Phe290 is subject to Phenylalanine amide. Positions 293 to 301 (SGNEDGDVD) are excised as a propeptide. 2 positions are modified to phenylalanine amide: Phe307 and Phe314. A propeptide spanning residues 317–325 (SEKEDGDVD) is cleaved from the precursor. Residues Phe331 and Phe338 each carry the phenylalanine amide modification. The propeptide occupies 341 to 346 (GDSETS).

The protein belongs to the FARP (FMRFamide related peptide) family. In terms of tissue distribution, central nervous system.

Its subcellular location is the secreted. In terms of biological role, can function as both cardioregulatory hormones and transmitters and may regulate cardiovascular function. The chain is FMRFamide-related peptides type HF-1 from Cornu aspersum (Brown garden snail).